Consider the following 137-residue polypeptide: Cell division protein SepF (137 aa).

This sequence belongs to the SepF family. In terms of assembly, homodimer. Interacts with FtsZ.

The protein localises to the cytoplasm. Cell division protein that is part of the divisome complex and is recruited early to the Z-ring. Probably stimulates Z-ring formation, perhaps through the cross-linking of FtsZ protofilaments. Its function overlaps with FtsA. The protein is Cell division protein SepF of Carboxydothermus hydrogenoformans (strain ATCC BAA-161 / DSM 6008 / Z-2901).